Reading from the N-terminus, the 197-residue chain is Nucleoside triphosphate pyrophosphatase (197 aa).

The Proton acceptor role is filled by aspartate 74.

It belongs to the Maf family. It depends on a divalent metal cation as a cofactor.

The protein resides in the cytoplasm. The catalysed reaction is a ribonucleoside 5'-triphosphate + H2O = a ribonucleoside 5'-phosphate + diphosphate + H(+). The enzyme catalyses a 2'-deoxyribonucleoside 5'-triphosphate + H2O = a 2'-deoxyribonucleoside 5'-phosphate + diphosphate + H(+). Functionally, nucleoside triphosphate pyrophosphatase. May have a dual role in cell division arrest and in preventing the incorporation of modified nucleotides into cellular nucleic acids. This chain is Nucleoside triphosphate pyrophosphatase, found in Granulibacter bethesdensis (strain ATCC BAA-1260 / CGDNIH1).